The chain runs to 278 residues: MTVLHSVDFFPSGKAPVAIEPRLPQAAFPEHHHDFHEIVIVEHGTGIHVFNGQPYTISGGTVCFVRDHDRHLYEHTDNLCLTNVLWRSPEAFQFLAGLEQLLPQEQDGYYPSHWRVNQSALQQVRQLVGLMERAGDGMDAPAVANREILFMQLLVLLRRSSLMEGATDNDAKLNQLMAWLEDHFAEEVCWEAVAEQFSLSLRTLHRQLKQHTGLTPQRYLNRLRLIKARHLLRHSDHSVTEIAYRCGFGDSNHFSTLFRREFNWSPRDIRQGRDAIPQ.

The region spanning 174–272 (NQLMAWLEDH…NWSPRDIRQG (99 aa)) is the HTH araC/xylS-type domain. DNA-binding regions (H-T-H motif) lie at residues 191 to 212 (EAVA…KQHT) and 239 to 262 (VTEI…RREF).

Binds DNA as a dimer.

It is found in the cytoplasm. Activates expression of the rhaBAD and rhaT operons. The sequence is that of HTH-type transcriptional activator RhaS from Salmonella arizonae (strain ATCC BAA-731 / CDC346-86 / RSK2980).